Here is a 389-residue protein sequence, read N- to C-terminus: Glutamate 5-kinase (389 aa).

Lysine 16 provides a ligand contact to ATP. Substrate contacts are provided by serine 56, aspartate 143, and asparagine 155. Residue 175–176 (SD) coordinates ATP. Residues 281–358 (AGELHVDDGA…AEIEAILGYA (78 aa)) enclose the PUA domain.

This sequence belongs to the glutamate 5-kinase family.

The protein resides in the cytoplasm. The enzyme catalyses L-glutamate + ATP = L-glutamyl 5-phosphate + ADP. Its pathway is amino-acid biosynthesis; L-proline biosynthesis; L-glutamate 5-semialdehyde from L-glutamate: step 1/2. In terms of biological role, catalyzes the transfer of a phosphate group to glutamate to form L-glutamate 5-phosphate. The chain is Glutamate 5-kinase from Rhizobium etli (strain CIAT 652).